A 302-amino-acid polypeptide reads, in one-letter code: MWFKNLMTYRLTKPLDWDLAQLQTQLEDCQFHPCGTQDQSKFGWSAPLRGSDLLYFSVGKQILLIAKKEEKILPANVVKRELDDRIESLEQKENRKLKKVEKQTLKDDVVMNLLPRAFSKNQHTALWIDTENNLIHIDAASSKRAEDALALLRKSLGSLPVVPLAFANEPSTILTNWILQDNLPHWLLALEEAELRGSQEDSVIRCKKQPLENEEILALLQDGKKVVSKLALEWEDTLTFVFNEDCTIKRLKFADTVREKNDDILKEDFAQRFDADFVLMTGILAKLTENLLDEFGGEKARL.

This sequence belongs to the RdgC family.

It is found in the cytoplasm. It localises to the nucleoid. In terms of biological role, may be involved in recombination. The chain is Recombination-associated protein RdgC from Haemophilus influenzae (strain PittGG).